The sequence spans 202 residues: Josephin-1 (202 aa).

S15 carries the phosphoserine modification. Residues 23–202 form the Josephin domain; the sequence is PPQIYHEKQR…EAHQSWRADV (180 aa). C36 (nucleophile) is an active-site residue. Catalysis depends on H139, which acts as the Proton acceptor.

As to quaternary structure, interacts with beta-actin/ACTB. Post-translationally, monoubiquitinated. Ubiquitination activates deubiquitination activity in vitro.

The protein resides in the cell membrane. The protein localises to the cytoplasm. The catalysed reaction is Thiol-dependent hydrolysis of ester, thioester, amide, peptide and isopeptide bonds formed by the C-terminal Gly of ubiquitin (a 76-residue protein attached to proteins as an intracellular targeting signal).. Deubiquitinates monoubiquitinated probes (in vitro). When ubiquitinated, cleaves 'Lys-63'-linked and 'Lys-48'-linked poly-ubiquitin chains (in vitro), hence may act as a deubiquitinating enzyme. May increase macropinocytosis and suppress clathrin- and caveolae-mediated endocytosis. May enhance membrane dynamics and cell motility independently of its catalytic activity. The protein is Josephin-1 (JOSD1) of Bos taurus (Bovine).